A 292-amino-acid chain; its full sequence is 4-hydroxy-tetrahydrodipicolinate synthase (292 aa).

Threonine 45 lines the pyruvate pocket. Tyrosine 133 (proton donor/acceptor) is an active-site residue. Lysine 161 (schiff-base intermediate with substrate) is an active-site residue. Isoleucine 203 lines the pyruvate pocket.

Belongs to the DapA family. In terms of assembly, homotetramer; dimer of dimers.

The protein resides in the cytoplasm. It carries out the reaction L-aspartate 4-semialdehyde + pyruvate = (2S,4S)-4-hydroxy-2,3,4,5-tetrahydrodipicolinate + H2O + H(+). The protein operates within amino-acid biosynthesis; L-lysine biosynthesis via DAP pathway; (S)-tetrahydrodipicolinate from L-aspartate: step 3/4. Functionally, catalyzes the condensation of (S)-aspartate-beta-semialdehyde [(S)-ASA] and pyruvate to 4-hydroxy-tetrahydrodipicolinate (HTPA). In Cronobacter sakazakii (strain ATCC BAA-894) (Enterobacter sakazakii), this protein is 4-hydroxy-tetrahydrodipicolinate synthase.